The chain runs to 582 residues: ATP-dependent lipid A-core flippase (582 aa).

The next 5 membrane-spanning stretches (helical) occupy residues 27 to 47 (LIVA…MISL), 69 to 89 (LIIF…TYCL), 142 to 162 (ALVS…LMFY), 165 to 185 (WQLS…IGVV), and 249 to 269 (AAAN…VLYL). Residues 28–310 (IVAVIALVIN…LTNVTSQFQR (283 aa)) enclose the ABC transmembrane type-1 domain. The region spanning 342 to 578 (VSVKDVSFTY…NGAYAQLHRI (237 aa)) is the ABC transporter domain. 376–383 (GRSGSGKS) is an ATP binding site.

Belongs to the ABC transporter superfamily. Lipid exporter (TC 3.A.1.106) family. As to quaternary structure, homodimer.

Its subcellular location is the cell inner membrane. The enzyme catalyses ATP + H2O + lipid A-core oligosaccharideSide 1 = ADP + phosphate + lipid A-core oligosaccharideSide 2.. Its function is as follows. Involved in lipopolysaccharide (LPS) biosynthesis. Translocates lipid A-core from the inner to the outer leaflet of the inner membrane. Transmembrane domains (TMD) form a pore in the inner membrane and the ATP-binding domain (NBD) is responsible for energy generation. The chain is ATP-dependent lipid A-core flippase from Vibrio parahaemolyticus serotype O3:K6 (strain RIMD 2210633).